Reading from the N-terminus, the 493-residue chain is 3-octaprenyl-4-hydroxybenzoate carboxy-lyase (493 aa).

A Mn(2+)-binding site is contributed by Asn172. Prenylated FMN-binding positions include 175-177, 189-191, and 194-195; these read IYR, RWL, and RG. Glu238 contributes to the Mn(2+) binding site. The active-site Proton donor is the Asp287.

This sequence belongs to the UbiD family. In terms of assembly, homohexamer. Requires prenylated FMN as cofactor. Mn(2+) is required as a cofactor.

It is found in the cell membrane. The enzyme catalyses a 4-hydroxy-3-(all-trans-polyprenyl)benzoate + H(+) = a 2-(all-trans-polyprenyl)phenol + CO2. Its pathway is cofactor biosynthesis; ubiquinone biosynthesis. In terms of biological role, catalyzes the decarboxylation of 3-octaprenyl-4-hydroxy benzoate to 2-octaprenylphenol, an intermediate step in ubiquinone biosynthesis. The chain is 3-octaprenyl-4-hydroxybenzoate carboxy-lyase from Shewanella sp. (strain MR-4).